The following is a 448-amino-acid chain: Portal protein (448 aa).

The segment at Met1 to Lys25 is disordered.

This sequence belongs to the P23virus portal protein family. In terms of assembly, homododecamer. Interacts with the capsid protein. Interacts with the terminase large subunit; this interaction allows the packaging of viral DNA.

The protein localises to the virion. Its function is as follows. Forms the portal vertex of the capsid. This portal plays critical roles in head assembly, genome packaging, neck/tail attachment, and genome ejection. The portal protein multimerizes as a single ring-shaped homododecamer arranged around a central channel. Forms the portal vertex of the capsid. This portal plays critical roles in head assembly, genome packaging, neck/tail attachment, and genome ejection. In Thermus thermophilus (Thermus thermophilus phage G20c), this protein is Portal protein.